Here is a 407-residue protein sequence, read N- to C-terminus: Imidazolonepropionase (407 aa).

His-74 and His-76 together coordinate Fe(3+). Zn(2+)-binding residues include His-74 and His-76. 4-imidazolone-5-propanoate contacts are provided by Arg-83, Tyr-146, and His-179. Tyr-146 is an N-formimidoyl-L-glutamate binding site. His-244 contacts Fe(3+). A Zn(2+)-binding site is contributed by His-244. Gln-247 provides a ligand contact to 4-imidazolone-5-propanoate. Fe(3+) is bound at residue Asp-319. Asp-319 lines the Zn(2+) pocket. Residues Asn-321 and Gly-323 each contribute to the N-formimidoyl-L-glutamate site. Thr-324 contacts 4-imidazolone-5-propanoate.

It belongs to the metallo-dependent hydrolases superfamily. HutI family. Zn(2+) serves as cofactor. It depends on Fe(3+) as a cofactor.

The protein localises to the cytoplasm. The catalysed reaction is 4-imidazolone-5-propanoate + H2O = N-formimidoyl-L-glutamate. Its pathway is amino-acid degradation; L-histidine degradation into L-glutamate; N-formimidoyl-L-glutamate from L-histidine: step 3/3. In terms of biological role, catalyzes the hydrolytic cleavage of the carbon-nitrogen bond in imidazolone-5-propanoate to yield N-formimidoyl-L-glutamate. It is the third step in the universal histidine degradation pathway. The polypeptide is Imidazolonepropionase (Salmonella typhimurium (strain LT2 / SGSC1412 / ATCC 700720)).